The sequence spans 179 residues: Embryo-specific protein ATS3A (179 aa).

Positions 1–22 (MLRLAIPLFLFALCSFTLFSSA) are cleaved as a signal peptide. Positions 48 to 158 (CSYTVIIKTS…NSVWYGFNVC (111 aa)) constitute a PLAT domain.

As to quaternary structure, interacts with EULS3 (via N-terminus). In terms of tissue distribution, expressed in roots, rosette leaves, stems, cauline leaves and flowers.

The protein resides in the secreted. In terms of biological role, may play a role during embryo development. The polypeptide is Embryo-specific protein ATS3A (Arabidopsis thaliana (Mouse-ear cress)).